A 142-amino-acid chain; its full sequence is MKTFVAKPETVKRDWYVVDAEGKTLGRLASEIASRLRGKHKAEYTPHVDTGDYIIVINAEKVAVTGNKAKNKVYYRHSEFPGGLKSITFEKLIDRKPEMALELAVKGMLPRGPLGRAMYRKLKVYAGAEHNHVAQQPQVLDI.

The protein belongs to the universal ribosomal protein uL13 family. In terms of assembly, part of the 50S ribosomal subunit.

This protein is one of the early assembly proteins of the 50S ribosomal subunit, although it is not seen to bind rRNA by itself. It is important during the early stages of 50S assembly. The chain is Large ribosomal subunit protein uL13 from Vibrio campbellii (strain ATCC BAA-1116).